The primary structure comprises 413 residues: Gamma-glutamyl phosphate reductase (413 aa).

This sequence belongs to the gamma-glutamyl phosphate reductase family.

Its subcellular location is the cytoplasm. The enzyme catalyses L-glutamate 5-semialdehyde + phosphate + NADP(+) = L-glutamyl 5-phosphate + NADPH + H(+). Its pathway is amino-acid biosynthesis; L-proline biosynthesis; L-glutamate 5-semialdehyde from L-glutamate: step 2/2. In terms of biological role, catalyzes the NADPH-dependent reduction of L-glutamate 5-phosphate into L-glutamate 5-semialdehyde and phosphate. The product spontaneously undergoes cyclization to form 1-pyrroline-5-carboxylate. This chain is Gamma-glutamyl phosphate reductase, found in Lactococcus lactis subsp. cremoris (strain MG1363).